Reading from the N-terminus, the 561-residue chain is Dihydroxy-acid dehydratase (561 aa).

Cys-50 contributes to the [2Fe-2S] cluster binding site. Asp-82 provides a ligand contact to Mg(2+). A [2Fe-2S] cluster-binding site is contributed by Cys-123. Mg(2+) contacts are provided by Asp-124 and Lys-125. Lys-125 is subject to N6-carboxylysine. Cys-195 provides a ligand contact to [2Fe-2S] cluster. Glu-447 lines the Mg(2+) pocket. The Proton acceptor role is filled by Ser-473.

The protein belongs to the IlvD/Edd family. In terms of assembly, homodimer. [2Fe-2S] cluster is required as a cofactor. It depends on Mg(2+) as a cofactor.

The enzyme catalyses (2R)-2,3-dihydroxy-3-methylbutanoate = 3-methyl-2-oxobutanoate + H2O. It catalyses the reaction (2R,3R)-2,3-dihydroxy-3-methylpentanoate = (S)-3-methyl-2-oxopentanoate + H2O. It functions in the pathway amino-acid biosynthesis; L-isoleucine biosynthesis; L-isoleucine from 2-oxobutanoate: step 3/4. Its pathway is amino-acid biosynthesis; L-valine biosynthesis; L-valine from pyruvate: step 3/4. Functionally, functions in the biosynthesis of branched-chain amino acids. Catalyzes the dehydration of (2R,3R)-2,3-dihydroxy-3-methylpentanoate (2,3-dihydroxy-3-methylvalerate) into 2-oxo-3-methylpentanoate (2-oxo-3-methylvalerate) and of (2R)-2,3-dihydroxy-3-methylbutanoate (2,3-dihydroxyisovalerate) into 2-oxo-3-methylbutanoate (2-oxoisovalerate), the penultimate precursor to L-isoleucine and L-valine, respectively. The protein is Dihydroxy-acid dehydratase of Synechocystis sp. (strain ATCC 27184 / PCC 6803 / Kazusa).